The sequence spans 457 residues: uncharacterized protein (457 aa).

The 59-residue stretch at P5–K63 folds into the TRAM domain. [4Fe-4S] cluster-binding residues include C76, C82, C85, and C166. S-adenosyl-L-methionine contacts are provided by Q290, Y319, D340, and D388. The active-site Nucleophile is C415.

Belongs to the class I-like SAM-binding methyltransferase superfamily. RNA M5U methyltransferase family.

This is an uncharacterized protein from Listeria innocua serovar 6a (strain ATCC BAA-680 / CLIP 11262).